A 336-amino-acid chain; its full sequence is UDP-glucose 4-epimerase (336 aa).

NAD(+)-binding positions include 11–12 (YI), 31–36 (DNLINS), 58–59 (DI), 80–84 (FAGLK), N99, S124, Y149, K153, and F178. S124 and Y149 together coordinate substrate. Y149 (proton acceptor) is an active-site residue. Substrate is bound by residues N179, 199 to 200 (NL), 216 to 218 (LVY), R231, and 290 to 293 (RPGD).

It belongs to the NAD(P)-dependent epimerase/dehydratase family. In terms of assembly, homodimer. NAD(+) serves as cofactor.

It carries out the reaction UDP-alpha-D-glucose = UDP-alpha-D-galactose. It participates in carbohydrate metabolism; galactose metabolism. Functionally, involved in the metabolism of galactose. Catalyzes the conversion of UDP-galactose (UDP-Gal) to UDP-glucose (UDP-Glc) through a mechanism involving the transient reduction of NAD. This Yersinia enterocolitica protein is UDP-glucose 4-epimerase (galE).